Here is a 315-residue protein sequence, read N- to C-terminus: 4-hydroxy-3-methylbut-2-enyl diphosphate reductase (315 aa).

Cys-12 is a binding site for [4Fe-4S] cluster. Residues His-41 and His-74 each coordinate (2E)-4-hydroxy-3-methylbut-2-enyl diphosphate. Dimethylallyl diphosphate-binding residues include His-41 and His-74. Isopentenyl diphosphate-binding residues include His-41 and His-74. Position 96 (Cys-96) interacts with [4Fe-4S] cluster. His-124 lines the (2E)-4-hydroxy-3-methylbut-2-enyl diphosphate pocket. His-124 is a binding site for dimethylallyl diphosphate. His-124 contributes to the isopentenyl diphosphate binding site. Glu-126 serves as the catalytic Proton donor. Thr-168 contacts (2E)-4-hydroxy-3-methylbut-2-enyl diphosphate. Residue Cys-198 coordinates [4Fe-4S] cluster. (2E)-4-hydroxy-3-methylbut-2-enyl diphosphate-binding residues include Ser-226, Ser-227, Asn-228, and Ser-270. Dimethylallyl diphosphate-binding residues include Ser-226, Ser-227, Asn-228, and Ser-270. Ser-226, Ser-227, Asn-228, and Ser-270 together coordinate isopentenyl diphosphate.

Belongs to the IspH family. Requires [4Fe-4S] cluster as cofactor.

It catalyses the reaction isopentenyl diphosphate + 2 oxidized [2Fe-2S]-[ferredoxin] + H2O = (2E)-4-hydroxy-3-methylbut-2-enyl diphosphate + 2 reduced [2Fe-2S]-[ferredoxin] + 2 H(+). The enzyme catalyses dimethylallyl diphosphate + 2 oxidized [2Fe-2S]-[ferredoxin] + H2O = (2E)-4-hydroxy-3-methylbut-2-enyl diphosphate + 2 reduced [2Fe-2S]-[ferredoxin] + 2 H(+). The protein operates within isoprenoid biosynthesis; dimethylallyl diphosphate biosynthesis; dimethylallyl diphosphate from (2E)-4-hydroxy-3-methylbutenyl diphosphate: step 1/1. It participates in isoprenoid biosynthesis; isopentenyl diphosphate biosynthesis via DXP pathway; isopentenyl diphosphate from 1-deoxy-D-xylulose 5-phosphate: step 6/6. Functionally, catalyzes the conversion of 1-hydroxy-2-methyl-2-(E)-butenyl 4-diphosphate (HMBPP) into a mixture of isopentenyl diphosphate (IPP) and dimethylallyl diphosphate (DMAPP). Acts in the terminal step of the DOXP/MEP pathway for isoprenoid precursor biosynthesis. The polypeptide is 4-hydroxy-3-methylbut-2-enyl diphosphate reductase (Pseudomonas syringae pv. tomato (strain ATCC BAA-871 / DC3000)).